The sequence spans 304 residues: D-alanine--D-alanine ligase (304 aa).

Residues 107–300 form the ATP-grasp domain; the sequence is KRLWQGSGLP…FDELVARILG (194 aa). ATP is bound at residue 134 to 186; that stretch reads VGYPVIVKPAREGSSLGMSRVEGPEELAEAYRVAAAYDDTVLAEAWVEGEEYT. Mg(2+)-binding residues include D254, E267, and N269.

The protein belongs to the D-alanine--D-alanine ligase family. Mg(2+) is required as a cofactor. The cofactor is Mn(2+).

The protein resides in the cytoplasm. It carries out the reaction 2 D-alanine + ATP = D-alanyl-D-alanine + ADP + phosphate + H(+). Its pathway is cell wall biogenesis; peptidoglycan biosynthesis. In terms of biological role, cell wall formation. This is D-alanine--D-alanine ligase from Halorhodospira halophila (strain DSM 244 / SL1) (Ectothiorhodospira halophila (strain DSM 244 / SL1)).